We begin with the raw amino-acid sequence, 215 residues long: Phosphatidylserine decarboxylase proenzyme (215 aa).

Residue S184 is the Schiff-base intermediate with substrate; via pyruvic acid of the active site. S184 carries the post-translational modification Pyruvic acid (Ser); by autocatalysis.

Belongs to the phosphatidylserine decarboxylase family. PSD-A subfamily. As to quaternary structure, heterodimer of a large membrane-associated beta subunit and a small pyruvoyl-containing alpha subunit. Pyruvate is required as a cofactor. In terms of processing, is synthesized initially as an inactive proenzyme. Formation of the active enzyme involves a self-maturation process in which the active site pyruvoyl group is generated from an internal serine residue via an autocatalytic post-translational modification. Two non-identical subunits are generated from the proenzyme in this reaction, and the pyruvate is formed at the N-terminus of the alpha chain, which is derived from the carboxyl end of the proenzyme. The post-translation cleavage follows an unusual pathway, termed non-hydrolytic serinolysis, in which the side chain hydroxyl group of the serine supplies its oxygen atom to form the C-terminus of the beta chain, while the remainder of the serine residue undergoes an oxidative deamination to produce ammonia and the pyruvoyl prosthetic group on the alpha chain.

The protein localises to the cell membrane. It carries out the reaction a 1,2-diacyl-sn-glycero-3-phospho-L-serine + H(+) = a 1,2-diacyl-sn-glycero-3-phosphoethanolamine + CO2. It functions in the pathway phospholipid metabolism; phosphatidylethanolamine biosynthesis; phosphatidylethanolamine from CDP-diacylglycerol: step 2/2. Its function is as follows. Catalyzes the formation of phosphatidylethanolamine (PtdEtn) from phosphatidylserine (PtdSer). This is Phosphatidylserine decarboxylase proenzyme from Aromatoleum aromaticum (strain DSM 19018 / LMG 30748 / EbN1) (Azoarcus sp. (strain EbN1)).